The following is a 444-amino-acid chain: Argininosuccinate synthase (444 aa).

ATP contacts are provided by residues 18-26 (AFSGGLDTS) and Ala44. L-citrulline is bound at residue Tyr100. ATP-binding residues include Gly130 and Thr132. 3 residues coordinate L-aspartate: Thr132, Asn136, and Asp137. Asn136 is an L-citrulline binding site. Position 137 (Asp137) interacts with ATP. L-citrulline is bound by residues Arg140 and Ser193. Position 195 (Asp195) interacts with ATP. 3 residues coordinate L-citrulline: Thr202, Glu204, and Glu281.

This sequence belongs to the argininosuccinate synthase family. Type 2 subfamily. Homotetramer.

The protein localises to the cytoplasm. It carries out the reaction L-citrulline + L-aspartate + ATP = 2-(N(omega)-L-arginino)succinate + AMP + diphosphate + H(+). The protein operates within amino-acid biosynthesis; L-arginine biosynthesis; L-arginine from L-ornithine and carbamoyl phosphate: step 2/3. In Histophilus somni (strain 2336) (Haemophilus somnus), this protein is Argininosuccinate synthase.